We begin with the raw amino-acid sequence, 385 residues long: 8-amino-7-oxononanoate synthase (385 aa).

Arginine 21 contributes to the substrate binding site. 108–109 (GF) contacts pyridoxal 5'-phosphate. Position 133 (histidine 133) interacts with substrate. Residues serine 179, histidine 207, and threonine 233 each contribute to the pyridoxal 5'-phosphate site. Lysine 236 bears the N6-(pyridoxal phosphate)lysine mark. Threonine 352 lines the substrate pocket.

It belongs to the class-II pyridoxal-phosphate-dependent aminotransferase family. BioF subfamily. Homodimer. Pyridoxal 5'-phosphate is required as a cofactor.

The enzyme catalyses 6-carboxyhexanoyl-[ACP] + L-alanine + H(+) = (8S)-8-amino-7-oxononanoate + holo-[ACP] + CO2. It functions in the pathway cofactor biosynthesis; biotin biosynthesis. Catalyzes the decarboxylative condensation of pimeloyl-[acyl-carrier protein] and L-alanine to produce 8-amino-7-oxononanoate (AON), [acyl-carrier protein], and carbon dioxide. In Salmonella paratyphi A (strain ATCC 9150 / SARB42), this protein is 8-amino-7-oxononanoate synthase.